Here is a 379-residue protein sequence, read N- to C-terminus: Protein OSCP1 (379 aa).

Predominantly expressed in testis.

The protein localises to the basal cell membrane. May be involved in drug clearance in the placenta. The polypeptide is Protein OSCP1 (Oscp1) (Mus musculus (Mouse)).